The chain runs to 340 residues: ATPase BagA (340 aa).

ATP contacts are provided by glycine 31, glycine 33, lysine 34, serine 35, threonine 36, asparagine 240, proline 316, and valine 318.

This sequence belongs to the arsA ATPase family. BagA/BagB subfamily. Forms a heterodimer composed of BagA and BagB. Interacts with Rv1509. Also interacts with a large number of proteins, including proteins required for mycolic acid biosynthesis.

The ATPase activity of the BagAB complex is not stimulated by antimonite, an arsenite substitute, suggesting that BagAB is not a transporter for this family of elements. Component of the heterodimeric BagAB ATPase complex, whose two subunits are actively involved in ATP hydrolysis. The ATPase activity is required to mediate resistance against nitric oxide (NO) and elevated levels of glycerol. This is ATPase BagA from Mycobacterium tuberculosis (strain ATCC 25618 / H37Rv).